Reading from the N-terminus, the 389-residue chain is Chalcone synthase 6 (389 aa).

Residue Cys-164 is part of the active site.

This sequence belongs to the thiolase-like superfamily. Chalcone/stilbene synthases family.

It carries out the reaction (E)-4-coumaroyl-CoA + 3 malonyl-CoA + 3 H(+) = 2',4,4',6'-tetrahydroxychalcone + 3 CO2 + 4 CoA. Its pathway is secondary metabolite biosynthesis; flavonoid biosynthesis. Its function is as follows. The primary product of this enzyme is 4,2',4',6'-tetrahydroxychalcone (also termed naringenin-chalcone or chalcone) which can under specific conditions spontaneously isomerize into naringenin. The protein is Chalcone synthase 6 (CHS6) of Trifolium subterraneum (Subterranean clover).